The primary structure comprises 343 residues: Methionine import ATP-binding protein MetN (343 aa).

The 240-residue stretch at 2–241 (IKLSNITKVF…PKTPLAQKFI (240 aa)) folds into the ABC transporter domain. 40–46 (SGAGKST) is an ATP binding site. The C2 domain stretch occupies residues 265–343 (CVPMLRLEFT…HVKVEVLGYV (79 aa)). Residues 278 to 283 (VDAPLL) and 295 to 296 (NI) contribute to the L-methionine site.

This sequence belongs to the ABC transporter superfamily. Methionine importer (TC 3.A.1.24) family. As to quaternary structure, the complex is composed of two ATP-binding proteins (MetN), two transmembrane proteins (MetI) and a solute-binding protein (MetQ).

The protein localises to the cell inner membrane. The catalysed reaction is L-methionine(out) + ATP + H2O = L-methionine(in) + ADP + phosphate + H(+). It carries out the reaction D-methionine(out) + ATP + H2O = D-methionine(in) + ADP + phosphate + H(+). ATPase activity is inhibited by intracellular L-methionine. Binding of methionine to the dimerized C-terminal regulatory domain stabilizes an inward-facing, ATPase-inactive conformation of the transporter, and as a consequence, the rate of ATP hydrolysis decreases. ADP is a competitive inhibitor. In terms of biological role, part of the ABC transporter complex MetNIQ involved in methionine import. Responsible for energy coupling to the transport system. It has also been shown to be involved in formyl-L-methionine transport. This Escherichia coli (strain K12) protein is Methionine import ATP-binding protein MetN.